A 339-amino-acid polypeptide reads, in one-letter code: tRNA N6-adenosine threonylcarbamoyltransferase (339 aa).

Residues His111 and His115 each coordinate Fe cation. Substrate contacts are provided by residues 139 to 143, Asp172, Gly185, Asp189, and Asn280; that span reads LVSGG. Asp308 is a Fe cation binding site.

Belongs to the KAE1 / TsaD family. The cofactor is Fe(2+).

The protein resides in the cytoplasm. It catalyses the reaction L-threonylcarbamoyladenylate + adenosine(37) in tRNA = N(6)-L-threonylcarbamoyladenosine(37) in tRNA + AMP + H(+). Required for the formation of a threonylcarbamoyl group on adenosine at position 37 (t(6)A37) in tRNAs that read codons beginning with adenine. Is involved in the transfer of the threonylcarbamoyl moiety of threonylcarbamoyl-AMP (TC-AMP) to the N6 group of A37, together with TsaE and TsaB. TsaD likely plays a direct catalytic role in this reaction. In Bacteroides fragilis (strain ATCC 25285 / DSM 2151 / CCUG 4856 / JCM 11019 / LMG 10263 / NCTC 9343 / Onslow / VPI 2553 / EN-2), this protein is tRNA N6-adenosine threonylcarbamoyltransferase.